The primary structure comprises 267 residues: Small ribosomal subunit protein uS2 (267 aa).

The interval 222–267 is disordered; it reads GKALRDQDSEEEIQNKEQDEVSQEEKDDILDEAMNEEDFEIPEDKE. Residues 223–240 show a composition bias toward basic and acidic residues; sequence KALRDQDSEEEIQNKEQD. Over residues 241–267 the composition is skewed to acidic residues; that stretch reads EVSQEEKDDILDEAMNEEDFEIPEDKE.

Belongs to the universal ribosomal protein uS2 family.

This Campylobacter hominis (strain ATCC BAA-381 / DSM 21671 / CCUG 45161 / LMG 19568 / NCTC 13146 / CH001A) protein is Small ribosomal subunit protein uS2.